We begin with the raw amino-acid sequence, 56 residues long: Meucin-25 (56 aa).

The signal sequence occupies residues 1 to 31; the sequence is MFRIEYSLVQLLLRNVTIPLLLIIQMHIMSS.

It belongs to the non-disulfide-bridged peptide (NDBP) superfamily. Antimalarial peptide (group 5) family. Expressed by the venom gland.

The protein resides in the secreted. Its function is as follows. This synthetic cationic peptide inhibits the development of Plasmodium berghei ookinetes, kills intraerythrocytic P.falciparum, and is cytotoxic to the Drosophila S2 cell at micromolar concentrations. No antibacterial, antifungal and hemolytic activities have been found at micromolar concentrations. The chain is Meucin-25 from Mesobuthus eupeus (Lesser Asian scorpion).